Here is a 122-residue protein sequence, read N- to C-terminus: Vitelline membrane protein Vm32E (122 aa).

The N-terminal stretch at 1-19 is a signal peptide; the sequence is MKTVAFLAVVVLFAAFACA. In terms of domain architecture, VM spans 40-79; the sequence is SVPAPPCPKNYLFSCQPNLVPAPCAQQAAPAAYGSAGAYT.

It belongs to the vitelline membrane family.

The protein localises to the secreted. Functionally, major early eggshell protein. The sequence is that of Vitelline membrane protein Vm32E from Drosophila persimilis (Fruit fly).